An 891-amino-acid chain; its full sequence is MATQIDASSEAAAATAAAQHTPMMQQYLRIKSEHPDTLVFYRMGDFYELFFEDAEKAARLLDLTLTQRGASAGTPIKMAGVPHHAVEQYLAKLVKFGESAAICEQIGDPATSKGPVERKVVRVVTPGTLTDAALLSDKSDVFLLALCVGHNKRGVASNIGLAWLNLASGALRLAELAPDQLGAALERIRPAEILAADGTIESVPAGMGAITRVPAWHFDIASGTQRLCDQLEVASLDGFGAQALTSANGAAGALLIYAAATQGQQLRHVRSLKVENESEYIGLDPSTRRNLELTETLRGTESPTLYSLLDTCCTAMGSRLLRHWLHHPPRASVAAQARHQAIGALLDAPPNAGLDSLRSALRQIADVERITGRLALLSARPRDLSSLRDTFAALPALRERVAEIASNAAALGRLEAALEPPPGCLDLLTRAIAAEPAAMVRDGGVIARGYDAELDELRDISENCGQFLIDLETRERARTGISNLRVEYNKVHGFYIEVTRGQTDKVPDDYRRRQTLKNAERYITPELKTFEDKALSAQERALARERALYDGVLQALLPHIEGCQRVASGLAELDLLAAFAERARTLDWVAPEFTDEIGIEIDQGRHPVVEAQVEQFIANDCALNPERKLLLITGPNMGGKSTFMRQTALIALMAYVGSYVPAKAARFGPIDRIFTRIGAADDLAGGRSTFMVEMTEAAAILNDATPHSLVLMDEIGRGTSTFDGLALAWAIARHLLSHNRCYTLFATHYFELTQLPAEFPQAANVHLSAVEHGHGIVFLHAVEEGPANQSYGLQVAQLAGVPAPVIRAARKHLEHLEQQSAAQATPQLDLFAAPPVVDEPECNEPPAAATPHPALERLLELDPDDLKPRDALDLLYELHTLARSGPADAQR.

634 to 641 is a binding site for ATP; the sequence is GPNMGGKS.

The protein belongs to the DNA mismatch repair MutS family.

Functionally, this protein is involved in the repair of mismatches in DNA. It is possible that it carries out the mismatch recognition step. This protein has a weak ATPase activity. The polypeptide is DNA mismatch repair protein MutS (Burkholderia pseudomallei (strain 1106a)).